Consider the following 113-residue polypeptide: Prefoldin subunit beta (113 aa).

The protein belongs to the prefoldin subunit beta family. As to quaternary structure, heterohexamer of two alpha and four beta subunits.

Its subcellular location is the cytoplasm. In terms of biological role, molecular chaperone capable of stabilizing a range of proteins. Seems to fulfill an ATP-independent, HSP70-like function in archaeal de novo protein folding. This chain is Prefoldin subunit beta, found in Methanococcus maripaludis (strain DSM 14266 / JCM 13030 / NBRC 101832 / S2 / LL).